A 295-amino-acid polypeptide reads, in one-letter code: MKDYVVKATAYDGEVRAIALRATEMVKEACKRQGTWPTASAALGRTMMGGALMASMLKGKDKLTVRIQGNGPIGEIIVDAHASGATRGTVTNPHVSPELNSKGKLDVARVVGTEGTLSVVKDLGMKEPFTGSVPIVSGEIGDDFTYYFANSEQTPSSVGVGVLVNPDESVLAAGGFVIQLLPGAKEATITEIEKRIGETPPISKLVEQGKTPEEIINGLLGEENVKFLETKPVFFECSCSKERIGNAIISLGTKEIEAMITEDGGAETVCHFCNESYSFTEAELKALLEEAESKR.

Disulfide bonds link Cys237–Cys239 and Cys270–Cys273.

Belongs to the HSP33 family. Post-translationally, under oxidizing conditions two disulfide bonds are formed involving the reactive cysteines. Under reducing conditions zinc is bound to the reactive cysteines and the protein is inactive.

It is found in the cytoplasm. Its function is as follows. Redox regulated molecular chaperone. Protects both thermally unfolding and oxidatively damaged proteins from irreversible aggregation. Plays an important role in the bacterial defense system toward oxidative stress. This chain is 33 kDa chaperonin, found in Shouchella clausii (strain KSM-K16) (Alkalihalobacillus clausii).